The chain runs to 463 residues: tRNA modification GTPase MnmE (463 aa).

The (6S)-5-formyl-5,6,7,8-tetrahydrofolate site is built by Arg-30, Glu-92, and Arg-132. The region spanning 227 to 386 (GLRVALVGRP…LVQAVLERCG (160 aa)) is the TrmE-type G domain. Asn-237 lines the K(+) pocket. GTP-binding positions include 237–242 (NVGKSS), 256–262 (TDLPGTT), 281–284 (DTAG), and 342–345 (NKAD). Ser-241 contributes to the Mg(2+) binding site. The K(+) site is built by Thr-256, Leu-258, and Thr-261. A Mg(2+)-binding site is contributed by Thr-262. Lys-463 provides a ligand contact to (6S)-5-formyl-5,6,7,8-tetrahydrofolate.

Belongs to the TRAFAC class TrmE-Era-EngA-EngB-Septin-like GTPase superfamily. TrmE GTPase family. In terms of assembly, homodimer. Heterotetramer of two MnmE and two MnmG subunits. K(+) serves as cofactor.

Its subcellular location is the cytoplasm. In terms of biological role, exhibits a very high intrinsic GTPase hydrolysis rate. Involved in the addition of a carboxymethylaminomethyl (cmnm) group at the wobble position (U34) of certain tRNAs, forming tRNA-cmnm(5)s(2)U34. The sequence is that of tRNA modification GTPase MnmE from Synechococcus sp. (strain CC9311).